A 65-amino-acid chain; its full sequence is Large ribosomal subunit protein bL35 (65 aa).

2 stretches are compositionally biased toward basic residues: residues 1–15 and 26–44; these read MPKM…KRFT and QAFK…KRQL. Positions 1–65 are disordered; sequence MPKMKTKKSA…KSVRAMMPYA (65 aa).

Belongs to the bacterial ribosomal protein bL35 family.

This chain is Large ribosomal subunit protein bL35, found in Cupriavidus metallidurans (strain ATCC 43123 / DSM 2839 / NBRC 102507 / CH34) (Ralstonia metallidurans).